A 511-amino-acid chain; its full sequence is Maturase K (511 aa).

This sequence belongs to the intron maturase 2 family. MatK subfamily.

It is found in the plastid. It localises to the chloroplast. Its function is as follows. Usually encoded in the trnK tRNA gene intron. Probably assists in splicing its own and other chloroplast group II introns. The protein is Maturase K of Hordeum vulgare (Barley).